We begin with the raw amino-acid sequence, 298 residues long: Putative enoyl-CoA reductase (298 aa).

A run of 4 helical transmembrane segments spans residues 162 to 182 (CVYY…PYYT), 189 to 209 (LVNA…AVHV), 229 to 249 (ILFS…WVAF), and 254 to 274 (SMLT…EWAV).

This sequence belongs to the steroid 5-alpha reductase family.

It is found in the membrane. It functions in the pathway lipid metabolism; fatty acid biosynthesis. Its function is as follows. Involved in the synthesis of fatty acids. This chain is Putative enoyl-CoA reductase, found in Trypanosoma brucei brucei (strain 927/4 GUTat10.1).